Here is a 380-residue protein sequence, read N- to C-terminus: Alcohol dehydrogenase 1 (380 aa).

8 residues coordinate Zn(2+): Cys-48, Thr-50, His-70, Cys-100, Cys-103, Cys-106, Cys-114, and Cys-178. An alcohol contacts are provided by Thr-50 and His-70. Residue Thr-50 participates in NAD(+) binding. NAD(+) contacts are provided by residues 203–208 (GLGAVG), Asp-227, Arg-232, Thr-273, Val-296, 296–298 (VGV), and Arg-373.

Belongs to the zinc-containing alcohol dehydrogenase family. In terms of assembly, homodimer. Zn(2+) serves as cofactor.

Its subcellular location is the cytoplasm. It catalyses the reaction a primary alcohol + NAD(+) = an aldehyde + NADH + H(+). The enzyme catalyses a secondary alcohol + NAD(+) = a ketone + NADH + H(+). The sequence is that of Alcohol dehydrogenase 1 from Pisum sativum (Garden pea).